Consider the following 67-residue polypeptide: Phycobilisome 7.8 kDa linker polypeptide, allophycocyanin-associated, core (67 aa).

The 56-residue stretch at 1–56 (GRLFKITACVPSQTRIRTQRELQNTYFTKLVPYENWFREQQRIQKMGGKIVKVELA) folds into the CpcD-like domain.

This sequence belongs to the phycobilisome linker protein family.

The protein resides in the cellular thylakoid membrane. Its function is as follows. Rod linker protein, associated with allophycocyanin. Linker polypeptides determine the state of aggregation and the location of the disk-shaped phycobiliprotein units within the phycobilisome and modulate their spectroscopic properties in order to mediate a directed and optimal energy transfer. The protein is Phycobilisome 7.8 kDa linker polypeptide, allophycocyanin-associated, core (apcC) of Mastigocladus laminosus (Fischerella sp.).